A 196-amino-acid polypeptide reads, in one-letter code: Gastrula zinc finger protein XlCGF64.1 (196 aa).

7 C2H2-type zinc fingers span residues 6 to 28, 34 to 56, 62 to 84, 90 to 112, 118 to 140, 146 to 168, and 174 to 196; these read YECP…QRGH, FMCT…QFIH, YVCT…QRGH, FTCT…QFIH, YECT…QRGH, and LMCT…KLSH.

This sequence belongs to the krueppel C2H2-type zinc-finger protein family.

It localises to the nucleus. Its function is as follows. May be involved in transcriptional regulation. The protein is Gastrula zinc finger protein XlCGF64.1 of Xenopus laevis (African clawed frog).